A 457-amino-acid chain; its full sequence is MVGRPVEPGALLQGQTVTVPITALAAGGDGIARLTDGRVLFVAGAVPGDTVEARLVHLKKDHGFGKILQIVQASPHRIEAPCPVAERCGSCQWQWIDYPFQLEAKQRQVREALEHLGGFAEPPVEPVIAQPRPFGYRNKSTFPIGRDARGEPVIGYYQKDSHRIVPLDACPVQDSRLDPLLAAARELIRTQGWSIYDEKHHRGALRHLGLRIGERTGQRLLTFVVNGQTLSGIKPAAQALMDRFADLVGVCLNTHTERGNTIFGPQTRCLAGQDFIEEVLDGFRFRIEPTTFFQICTSQAEILARLVARGADATAEQTVVDAYCGIGTLSLPLARAARAVVGIESHVRSVEQARQNARINGIENCRFLAGTVEALLPDLRADIVVVDPPRKGCDPEVLEAILHAVPMRVVYVSCNPATLARDLKRLVAGGYCLVGVQPVDLFAQTHHVECVATLERS.

The TRAM domain occupies 10 to 69 (ALLQGQTVTVPITALAAGGDGIARLTDGRVLFVAGAVPGDTVEARLVHLKKDHGFGKILQ). [4Fe-4S] cluster is bound by residues cysteine 82, cysteine 88, cysteine 91, and cysteine 170. Positions 294, 323, 344, and 387 each coordinate S-adenosyl-L-methionine. Residue cysteine 414 is the Nucleophile of the active site.

Belongs to the class I-like SAM-binding methyltransferase superfamily. RNA M5U methyltransferase family.

This is an uncharacterized protein from Gloeobacter violaceus (strain ATCC 29082 / PCC 7421).